A 145-amino-acid chain; its full sequence is Transcription antitermination protein NusB (145 aa).

This sequence belongs to the NusB family.

Functionally, involved in transcription antitermination. Required for transcription of ribosomal RNA (rRNA) genes. Binds specifically to the boxA antiterminator sequence of the ribosomal RNA (rrn) operons. The chain is Transcription antitermination protein NusB from Geobacter sp. (strain M21).